We begin with the raw amino-acid sequence, 446 residues long: MSIDTIVAIATPPGRGGVGIVRISGPNAYAIALCLNGNKALQPRLATFCSLYKGNNEVLDQGLVLYFKGPHSFTGEDVIEIQAHGSPVVLDLLIKESIAAGARLARPGEFSERAFLNDKIDLIQAEAIADLIQASSDTAARMALKSLQGDFSKKINQLNEELIYLRMYVEAAIDFPEEEIDFLNDGNVSQLLQRIIGRLEEIRSQANQGVLLREGLSLVIAGRPNAGKSTLINNLAGRDVAIVTEIAGTTRDIMREHILLDDIPLHIIDTAGLRDSDDLVEKEGIKRAWQELKRADCVLLVVDINNPDQQNSLLNELRLTLPNKIPIITVYNKIDTTKLTAKCDEHTVYLSAKTGEGLDELKKVIKQVVGYQPTEGQFLARRRHLQALDEAKALLLTGQSQLTNHKAGELLAEDLRLAHQTLCEITGEFTSDDLLGKIFSSFCIGK.

Positions 22, 80, and 119 each coordinate (6S)-5-formyl-5,6,7,8-tetrahydrofolate. The region spanning 215-370 (GLSLVIAGRP…LKKVIKQVVG (156 aa)) is the TrmE-type G domain. Residue Asn-225 participates in K(+) binding. GTP-binding positions include 225–230 (NAGKST), 244–250 (TEIAGTT), and 269–272 (DTAG). Residue Ser-229 coordinates Mg(2+). K(+) is bound by residues Thr-244, Ile-246, and Thr-249. Thr-250 is a binding site for Mg(2+). Residue Lys-446 coordinates (6S)-5-formyl-5,6,7,8-tetrahydrofolate.

It belongs to the TRAFAC class TrmE-Era-EngA-EngB-Septin-like GTPase superfamily. TrmE GTPase family. As to quaternary structure, homodimer. Heterotetramer of two MnmE and two MnmG subunits. K(+) serves as cofactor.

The protein localises to the cytoplasm. Functionally, exhibits a very high intrinsic GTPase hydrolysis rate. Involved in the addition of a carboxymethylaminomethyl (cmnm) group at the wobble position (U34) of certain tRNAs, forming tRNA-cmnm(5)s(2)U34. This chain is tRNA modification GTPase MnmE, found in Legionella pneumophila (strain Corby).